The sequence spans 160 residues: Cytochrome b6-f complex subunit 4 (160 aa).

Helical transmembrane passes span 36–56 (LLYIFPVVILGTIACVVGLAV), 95–115 (LLGIALQTLIPLGLMILPFIE), and 131–151 (SLFLFGTVLTMYLGIGACLPI).

This sequence belongs to the cytochrome b family. PetD subfamily. In terms of assembly, the 4 large subunits of the cytochrome b6-f complex are cytochrome b6, subunit IV (17 kDa polypeptide, PetD), cytochrome f and the Rieske protein, while the 4 small subunits are PetG, PetL, PetM and PetN. The complex functions as a dimer.

It localises to the cellular thylakoid membrane. In terms of biological role, component of the cytochrome b6-f complex, which mediates electron transfer between photosystem II (PSII) and photosystem I (PSI), cyclic electron flow around PSI, and state transitions. The sequence is that of Cytochrome b6-f complex subunit 4 from Prochlorococcus marinus (strain NATL2A).